A 338-amino-acid chain; its full sequence is Replication factor C small subunit (338 aa).

ATP is bound at residue 53 to 60; sequence GPPGVGKT.

This sequence belongs to the activator 1 small subunits family. RfcS subfamily. As to quaternary structure, heteromultimer composed of small subunits (RfcS) and large subunits (RfcL).

In terms of biological role, part of the RFC clamp loader complex which loads the PCNA sliding clamp onto DNA. The protein is Replication factor C small subunit of Methanosarcina acetivorans (strain ATCC 35395 / DSM 2834 / JCM 12185 / C2A).